We begin with the raw amino-acid sequence, 164 residues long: uncharacterized protein (164 aa).

The RDD domain occupies 26–158 (YAGFWVRFWA…DYIADTTVVH (133 aa)). Transmembrane regions (helical) follow at residues 35–55 (AFLL…SPLF) and 66–86 (MFTF…YFAL).

The protein localises to the cell membrane. This is an uncharacterized protein from Bacillus subtilis (strain 168).